Here is a 448-residue protein sequence, read N- to C-terminus: MTFSDLLTKLQDNLDIVFNANALKERIQSDPAFAKTIREQLKLLYFLEQKQAKAKTKKKDFQPVFQNLEARFVSLGQTKLANTELNLKLDLTDATDLANYLPIAVCNLFNRDLNSFSKLSSVQPTAVEKTTNGANKPTVTIDLNQPRIHTTGTVSPELENFVNESLEARARQRAFMRVTSERMVGKIFEFQFKSQWIKWAQLAIFISMLLIGAAAIAYLVVVNLLFYRYVNPDSNLTKAVTGQNNTDRPALVDLNGGINLFFPVSASTLITLIFLGFGSTSFLLAFQGKPYSFATRSQTFKAMHFLKHQFGVTDFPRINDNYRYKVRIKWIFWTIFLFVALNALPGGNIITGGILNPSFLLNALRSNELKINSETFKTIFVGFSIFYLASIIPFALISIIAFVLSPKPSSDQTNEVLNRYVQEEMQQPFKTDCDPNNDNDLTPPAVFG.

Polar residues predominate over residues 428-440 (PFKTDCDPNNDND). Positions 428–448 (PFKTDCDPNNDNDLTPPAVFG) are disordered.

This is an uncharacterized protein from Mycoplasma pneumoniae (strain ATCC 29342 / M129 / Subtype 1) (Mycoplasmoides pneumoniae).